The following is a 451-amino-acid chain: G-protein coupled receptor 61 (451 aa).

Residues 1–14 show a composition bias toward low complexity; sequence MESSPIPQSSGNSS. Residues 1-31 are disordered; sequence MESSPIPQSSGNSSTLGRVPQTPGPSTASGV. The Extracellular segment spans residues 1–44; the sequence is MESSPIPQSSGNSSTLGRVPQTPGPSTASGVPEVGLRDVASESV. A glycan (N-linked (GlcNAc...) asparagine) is linked at Asn12. The chain crosses the membrane as a helical span at residues 45-67; sequence ALFFMLLLDLTAVAGNAAVMAVI. Over 68 to 75 the chain is Cytoplasmic; the sequence is AKTPALRK. A helical membrane pass occupies residues 76-98; the sequence is FVFVFHLCLVDLLAALTLMPLAM. At 99 to 112 the chain is on the extracellular side; sequence LSSSALFDHALFGE. The helical transmembrane segment at 113-135 threads the bilayer; that stretch reads VACRLYLFLSVCFVSLAILSVSA. At 136 to 155 the chain is on the cytoplasmic side; sequence INVERYYYVVHPMRYEVRMT. The helical transmembrane segment at 156-178 threads the bilayer; that stretch reads LGLVASVLVGVWVKALAMASVPV. Residues 179 to 206 are Extracellular-facing; it reads LGRVSWEEGAPSVPPGCSLQWSHSAYCQ. A helical membrane pass occupies residues 207–229; that stretch reads LFVVVFAVLYFLLPLLLILVVYC. Over 230 to 287 the chain is Cytoplasmic; that stretch reads SMFRVARVAAMQHGPLPTWMETPRQRSESLSSRSTMVTSSGAPQTTPHRTFGGGKAAV. Residues 288-310 traverse the membrane as a helical segment; it reads VLLAVGGQFLLCWLPYFSFHLYV. The Extracellular portion of the chain corresponds to 311–324; it reads ALSAQPISTGQVES. The helical transmembrane segment at 325–344 threads the bilayer; the sequence is VVTWIGYFCFTSNPFFYGCL. The Cytoplasmic segment spans residues 345–451; it reads NRQIRGELSK…RPAASPRLES (107 aa).

It belongs to the G-protein coupled receptor 1 family. Forms heterodimer with MTNR1B. Interacts with ARRB1 and ARRB2 in a spontaneous and agonist-independent manner; leading to the internalization of GPR61 in the endosomal compartment. Expressed in brain; detected in frontal and temporal lobes, occipital pole, amygdala and hippocampus. Also expressed in testis and T cells, B cells, and monocyte. Low expression in many other tissues. Widely expressed in the hippocampus (at protein level).

It localises to the cell membrane. The protein resides in the endosome membrane. Functionally, orphan G-protein coupled receptor. Constitutively activates the G(s)-alpha/cAMP signaling pathway. Shows a reciprocal regulatory interaction with the melatonin receptor MTNR1B most likely through receptor heteromerization. May be involved in the regulation of food intake and body weight. The protein is G-protein coupled receptor 61 (GPR61) of Homo sapiens (Human).